The following is a 439-amino-acid chain: Cln5-like protein 3 (439 aa).

The signal sequence occupies residues 1–24 (MKNMLNIILTLTIIFIGLIKISIS). 10 N-linked (GlcNAc...) asparagine glycosylation sites follow: asparagine 93, asparagine 112, asparagine 122, asparagine 138, asparagine 168, asparagine 219, asparagine 268, asparagine 289, asparagine 304, and asparagine 359. The helical transmembrane segment at 371 to 391 (IIFISIAIGFGVVIILYISIG) threads the bilayer.

Belongs to the CLN5 family.

Its subcellular location is the membrane. This is Cln5-like protein 3 (cln5lc) from Dictyostelium discoideum (Social amoeba).